The sequence spans 381 residues: Cytochrome b (381 aa).

4 helical membrane passes run 36–56 (FGSLLAMCLIIQIITGLFLTM), 80–101 (WLIRTLHANGASFFFICIYIHI), 116–136 (WMVGVIILFLLMATAFMGYVL), and 181–201 (FYTFHFILPFIILMMTMIHLL). The heme b site is built by H86 and H100. H185 and H199 together coordinate heme b. An a ubiquinone-binding site is contributed by H204. A run of 4 helical transmembrane segments spans residues 229–249 (FKDMIGFIIISFLLIFLTLTN), 291–311 (LGGVIALIMSILILIILPLTF), 323–343 (MNQILFWIMVVTIILLTWIGA), and 350–370 (YVFVGQVLTIMYFSYYIINPM).

The protein belongs to the cytochrome b family. In terms of assembly, the main subunits of complex b-c1 are: cytochrome b, cytochrome c1 and the Rieske protein. Requires heme b as cofactor.

It is found in the mitochondrion inner membrane. Functionally, component of the ubiquinol-cytochrome c reductase complex (complex III or cytochrome b-c1 complex) that is part of the mitochondrial respiratory chain. The b-c1 complex mediates electron transfer from ubiquinol to cytochrome c. Contributes to the generation of a proton gradient across the mitochondrial membrane that is then used for ATP synthesis. This is Cytochrome b (MT-CYB) from Ostrinia nubilalis (European corn borer).